The chain runs to 911 residues: Protein translocase subunit SecA (911 aa).

Residues glutamine 87, 105–109 (GEGKT), and aspartate 512 contribute to the ATP site. The tract at residues 865–892 (AAEQDGAEEGAVATATAPVRSENKVGRN) is disordered. Low complexity predominate over residues 873–883 (EGAVATATAPV). Residues cysteine 895, cysteine 897, cysteine 906, and histidine 907 each contribute to the Zn(2+) site.

It belongs to the SecA family. In terms of assembly, monomer and homodimer. Part of the essential Sec protein translocation apparatus which comprises SecA, SecYEG and auxiliary proteins SecDF-YajC and YidC. It depends on Zn(2+) as a cofactor.

Its subcellular location is the cell inner membrane. The protein localises to the cytoplasm. The enzyme catalyses ATP + H2O + cellular proteinSide 1 = ADP + phosphate + cellular proteinSide 2.. Its function is as follows. Part of the Sec protein translocase complex. Interacts with the SecYEG preprotein conducting channel. Has a central role in coupling the hydrolysis of ATP to the transfer of proteins into and across the cell membrane, serving both as a receptor for the preprotein-SecB complex and as an ATP-driven molecular motor driving the stepwise translocation of polypeptide chains across the membrane. This is Protein translocase subunit SecA from Ectopseudomonas mendocina (strain ymp) (Pseudomonas mendocina).